The primary structure comprises 430 residues: Maltoporin (430 aa).

Residues 1–23 (MNNKKTLLAVAISGMMFATSAAA) form the signal peptide.

The protein belongs to the porin LamB (TC 1.B.3) family. In terms of assembly, homotrimer formed of three 18-stranded antiparallel beta-barrels, containing three independent channels.

The protein resides in the cell outer membrane. It catalyses the reaction beta-maltose(in) = beta-maltose(out). Its function is as follows. Involved in the transport of maltose and maltodextrins. In Actinobacillus succinogenes (strain ATCC 55618 / DSM 22257 / CCUG 43843 / 130Z), this protein is Maltoporin.